A 291-amino-acid chain; its full sequence is Lipoyl synthase (291 aa).

[4Fe-4S] cluster is bound by residues Cys-35, Cys-40, Cys-46, Cys-61, Cys-65, Cys-68, and Ser-273. Residues Phe-47–Glu-262 form the Radical SAM core domain.

It belongs to the radical SAM superfamily. Lipoyl synthase family. [4Fe-4S] cluster serves as cofactor.

It is found in the cytoplasm. It carries out the reaction [[Fe-S] cluster scaffold protein carrying a second [4Fe-4S](2+) cluster] + N(6)-octanoyl-L-lysyl-[protein] + 2 oxidized [2Fe-2S]-[ferredoxin] + 2 S-adenosyl-L-methionine + 4 H(+) = [[Fe-S] cluster scaffold protein] + N(6)-[(R)-dihydrolipoyl]-L-lysyl-[protein] + 4 Fe(3+) + 2 hydrogen sulfide + 2 5'-deoxyadenosine + 2 L-methionine + 2 reduced [2Fe-2S]-[ferredoxin]. The protein operates within protein modification; protein lipoylation via endogenous pathway; protein N(6)-(lipoyl)lysine from octanoyl-[acyl-carrier-protein]: step 2/2. Functionally, catalyzes the radical-mediated insertion of two sulfur atoms into the C-6 and C-8 positions of the octanoyl moiety bound to the lipoyl domains of lipoate-dependent enzymes, thereby converting the octanoylated domains into lipoylated derivatives. This is Lipoyl synthase from Geobacter sp. (strain M21).